Consider the following 91-residue polypeptide: MNKAELITSMAEKSKLTKKDAELALKALIESVEEALEKGEKVQLVGFGTFETRERAAREGRNPRTKEVINIPATTVPVFKAGKEFKDKVNK.

Belongs to the bacterial histone-like protein family.

Its function is as follows. Histone-like DNA-binding protein which is capable of wrapping DNA to stabilize it, and thus to prevent its denaturation under extreme environmental conditions. The polypeptide is DNA-binding protein HU (hup) (Clostridium pasteurianum).